The chain runs to 815 residues: ABC transporter G family member 7 (815 aa).

Disordered stretches follow at residues 81–141 and 177–249; these read NNID…TPNF and KQIK…TNGK. A coiled-coil region spans residues 164–199; the sequence is ENISYKTENRNYKKQIKDEKKRKKKLEMERSNSSNS. Positions 194–210 are enriched in low complexity; sequence SNSSNSNSSYDVESSAS. Residues 211 to 248 are compositionally biased toward polar residues; that stretch reads GLQTPQQSRSSILPTNSLNISKIDQSMNPQQTRSTTNG. In terms of domain architecture, ABC transporter spans 242-485; that stretch reads TRSTTNGKIE…SLPNQYQCPN (244 aa). 274 to 281 is an ATP binding site; it reads GPSGSGKS. The region spanning 562–810 is the ABC transmembrane type-2 domain; that stretch reads TQYITRLSGG…VSGYWAISKL (249 aa). 7 helical membrane-spanning segments follow: residues 568 to 588, 598 to 618, 647 to 667, 675 to 695, 706 to 726, 732 to 752, and 788 to 808; these read LSGG…LSPS, ILFF…TLFL, AFIQ…INHL, FITY…IIAI, FIYG…LVPV, SFGW…VMVA, and GIGI…WAIS.

Belongs to the ABC transporter superfamily. ABCG family.

It localises to the membrane. This chain is ABC transporter G family member 7 (abcG7), found in Dictyostelium discoideum (Social amoeba).